Consider the following 371-residue polypeptide: Glycerate kinase (371 aa).

This sequence belongs to the glycerate kinase type-1 family.

It catalyses the reaction (R)-glycerate + ATP = (2R)-3-phosphoglycerate + ADP + H(+). In Neisseria meningitidis serogroup B (strain ATCC BAA-335 / MC58), this protein is Glycerate kinase (glxK).